The primary structure comprises 172 residues: MMKLKSNQTRTYDGDGYKKRAACLCFRSESEEEVLLVSSSRHPDRWIVPGGGMEPEEEPGTAAVREVCEEAGVKGTLGRLVGIFENQERKHRTYVYVLIVTEVLEDWEDSVSIGRKREWFKIEDAINVLQCHKPVQASYFETLRQGYSANNGTPLVAPTYSVSAQSSMPGIR.

Met-1 carries the N-acetylmethionine modification. Residues Arg-10, 18-20, and 39-41 each bind substrate; these read KKR and SSR. The region spanning 17–144 is the Nudix hydrolase domain; the sequence is YKKRAACLCF…VQASYFETLR (128 aa). Gly-50 and Glu-66 together coordinate Mg(2+). Residues 51-72 carry the Nudix box motif; that stretch reads GGMEPEEEPGTAAVREVCEEAG. Glu-69 serves as the catalytic Proton acceptor. A Mg(2+)-binding site is contributed by Glu-70. Substrate is bound by residues 89-91, Arg-115, and Lys-133; that span reads RKH.

The protein belongs to the Nudix hydrolase family. DIPP subfamily. As to quaternary structure, monomer. Requires Mg(2+) as cofactor. It depends on Mn(2+) as a cofactor. Zn(2+) is required as a cofactor.

Its subcellular location is the cytoplasm. The protein localises to the nucleus. It catalyses the reaction diphospho-myo-inositol polyphosphate + H2O = myo-inositol polyphosphate + phosphate.. It carries out the reaction 5-diphospho-1D-myo-inositol 1,2,3,4,6-pentakisphosphate + H2O = 1D-myo-inositol hexakisphosphate + phosphate + H(+). The catalysed reaction is 3,5-bis(diphospho)-1D-myo-inositol 1,2,4,6-tetrakisphosphate + H2O = 3-diphospho-1D-myo-inositol 1,2,4,5,6-pentakisphosphate + phosphate + 2 H(+). The enzyme catalyses [phosphate](n+1) + n H2O = (n+1) phosphate + n H(+). It catalyses the reaction P(1),P(5)-bis(5'-adenosyl) pentaphosphate + H2O = ADP + ATP + 2 H(+). It carries out the reaction P(1),P(6)-bis(5'-adenosyl) hexaphosphate + H2O = 2 ATP + 2 H(+). The catalysed reaction is P(1),P(4)-bis(5'-adenosyl) tetraphosphate + H2O = AMP + ATP + 2 H(+). The enzyme catalyses a 5'-end (N(7)-methyl 5'-triphosphoguanosine)-ribonucleoside in mRNA + H2O = N(7)-methyl-GMP + a 5'-end diphospho-ribonucleoside in mRNA + 2 H(+). It catalyses the reaction a 5'-end (N(7)-methyl 5'-triphosphoguanosine)-ribonucleoside in mRNA + H2O = N(7)-methyl-GDP + a 5'-end phospho-ribonucleoside in mRNA + 2 H(+). Cleaves a beta-phosphate from the diphosphate groups in PP-InsP5 (diphosphoinositol pentakisphosphate) and [PP]2-InsP4 (bisdiphosphoinositol tetrakisphosphate), suggesting that it may play a role in signal transduction. InsP6 (inositol hexakisphosphate) is not a substrate. Also able to catalyze the hydrolysis of dinucleoside oligophosphates, with diadenosine 5',5'''-P1,P6-hexaphosphate (Ap6A) and diadenosine 5',5'''- P1,P5-pentaphosphate (Ap5A) being the preferred substrates. The major reaction products are ADP and p4a from Ap6A and ADP and ATP from Ap5A. Also able to hydrolyze 5- phosphoribose 1-diphosphate. Acts as a decapping enzyme that can hydrolyze both monomethylated and unmethylated capped RNAs. Hydrolyzes monomethylated capped RNA after both the alpha- and beta-phosphates generating m7GMP + ppRNA and m7GDP + pRNA. Modulates the stability of a subset of mRNAs implicated in cell motility. Divalent cations zinc, magnesium and manganese determine its substrate specificity. Exhibits diphosphoinositol polyphosphate phosphohydrolase in the presence of magnesium ions, diadenosine hexaphosphate hydrolase activity in the presence of manganese ions and endopolyphosphatase activity in the presence of zinc ions. Plays an important role in limiting DNA damage and maintaining cell survival upon oxidative stress via its endopolyphosphatase activity. This is Diphosphoinositol polyphosphate phosphohydrolase 1 from Bos taurus (Bovine).